The following is a 163-amino-acid chain: MASVHGITVKNAQGEDTPLSNYQGKVLIIVNVASQCGLTNSNYNQFKELLDVYKKDGLEVLAFPCNQFGGQEPSCEIDIAAFVADKFKFEPTLFQKIDVNGDNTAPLYKFLKQEKGGFLVDAIKWNFTKFLVGRDGHVIKRFSPTTEPKDMKKDIEAALQAKL.

Cys-36 is an active-site residue.

This sequence belongs to the glutathione peroxidase family.

The protein resides in the cytoplasm. It catalyses the reaction 2 glutathione + H2O2 = glutathione disulfide + 2 H2O. In terms of biological role, may constitute a glutathione peroxidase-like protective system against oxidative stresses. This Caenorhabditis elegans protein is Glutathione peroxidase 2 (gpx-2).